Consider the following 294-residue polypeptide: Dolichol-phosphate mannosyltransferase (294 aa).

A disordered region spans residues Met-1–Thr-27. Residues Met-1–Arg-263 lie on the Cytoplasmic side of the membrane. The segment covering Pro-17 to Thr-27 has biased composition (low complexity). 12 residues coordinate GDP-alpha-D-mannose: Pro-35, Glu-39, Val-70, Asp-72, Asp-123, Ala-124, Asp-125, Gln-127, Arg-151, Lys-211, Arg-237, and Lys-243. Mg(2+) contacts are provided by Asp-125 and Gln-127. Positions 125 and 127 each coordinate Mn(2+). Residues Phe-264–Trp-284 form a helical membrane-spanning segment. At Ser-285 to Ala-294 the chain is on the lumenal side.

It belongs to the glycosyltransferase 2 family. The cofactor is Mg(2+). Requires Mn(2+) as cofactor. Ca(2+) is required as a cofactor.

The protein resides in the endoplasmic reticulum membrane. The catalysed reaction is a di-trans,poly-cis-dolichyl phosphate + GDP-alpha-D-mannose = a di-trans,poly-cis-dolichyl beta-D-mannosyl phosphate + GDP. Its pathway is protein modification; protein glycosylation. Transfers mannose from GDP-mannose to dolichol monophosphate to form dolichol phosphate mannose (Dol-P-Man) which is the mannosyl donor in pathways leading to N-glycosylation, glycosyl phosphatidylinositol membrane anchoring, and O-mannosylation of proteins. In Mycosarcoma maydis (Corn smut fungus), this protein is Dolichol-phosphate mannosyltransferase (DPM1).